Consider the following 453-residue polypeptide: tRNA modification GTPase MnmE (453 aa).

Positions 22, 79, and 119 each coordinate (6S)-5-formyl-5,6,7,8-tetrahydrofolate. The region spanning 215–376 (GMKVVIAGRP…LKQHLKSLMG (162 aa)) is the TrmE-type G domain. N225 serves as a coordination point for K(+). Residues 225–230 (NAGKSS), 244–250 (TEIAGTT), 269–272 (DTAG), and 334–337 (NKAD) each bind GTP. S229 serves as a coordination point for Mg(2+). The K(+) site is built by T244, I246, and T249. T250 lines the Mg(2+) pocket. K453 contributes to the (6S)-5-formyl-5,6,7,8-tetrahydrofolate binding site.

The protein belongs to the TRAFAC class TrmE-Era-EngA-EngB-Septin-like GTPase superfamily. TrmE GTPase family. As to quaternary structure, homodimer. Heterotetramer of two MnmE and two MnmG subunits. The cofactor is K(+).

It localises to the cytoplasm. In terms of biological role, exhibits a very high intrinsic GTPase hydrolysis rate. Involved in the addition of a carboxymethylaminomethyl (cmnm) group at the wobble position (U34) of certain tRNAs, forming tRNA-cmnm(5)s(2)U34. The sequence is that of tRNA modification GTPase MnmE from Shewanella halifaxensis (strain HAW-EB4).